Here is a 237-residue protein sequence, read N- to C-terminus: Keratin-associated protein 5-5 (237 aa).

8 repeat units span residues 62 to 65, 68 to 71, 74 to 77, 159 to 162, 178 to 181, 188 to 191, 198 to 201, and 227 to 230. The interval 62–230 is 8 X 4 AA repeats of C-C-X-P; that stretch reads CCVPVCCCKP…CCCQSSCCVP (169 aa).

It belongs to the KRTAP type 5 family. Interacts with hair keratins. In terms of tissue distribution, restricted to hair root, not detected in any other tissues.

In the hair cortex, hair keratin intermediate filaments are embedded in an interfilamentous matrix, consisting of hair keratin-associated protein (KRTAP), which are essential for the formation of a rigid and resistant hair shaft through their extensive disulfide bond cross-linking with abundant cysteine residues of hair keratins. The matrix proteins include the high-sulfur and high-glycine-tyrosine keratins. In Homo sapiens (Human), this protein is Keratin-associated protein 5-5 (KRTAP5-5).